The primary structure comprises 304 residues: Putative ankyrin repeat protein R602 (304 aa).

ANK repeat units follow at residues 82-117, 118-146, 147-176, 178-206, 207-236, and 238-266; these read LIRY…DITF, NDNF…DVHA, DNEF…DPFC, DNIV…DINA, GNNY…SIND, and SPND…DIST.

This is Putative ankyrin repeat protein R602 from Acanthamoeba polyphaga (Amoeba).